We begin with the raw amino-acid sequence, 291 residues long: Formamidopyrimidine-DNA glycosylase (291 aa).

The Schiff-base intermediate with DNA role is filled by P2. E3 serves as the catalytic Proton donor. The active-site Proton donor; for beta-elimination activity is K58. Residues H100, R123, and K166 each contribute to the DNA site. Residues 257–291 (SVYGREGKECFQCGIPITRISQSGRSSFYCSQCQK) form an FPG-type zinc finger. R281 serves as the catalytic Proton donor; for delta-elimination activity.

Belongs to the FPG family. As to quaternary structure, monomer. Zn(2+) is required as a cofactor.

It catalyses the reaction Hydrolysis of DNA containing ring-opened 7-methylguanine residues, releasing 2,6-diamino-4-hydroxy-5-(N-methyl)formamidopyrimidine.. It carries out the reaction 2'-deoxyribonucleotide-(2'-deoxyribose 5'-phosphate)-2'-deoxyribonucleotide-DNA = a 3'-end 2'-deoxyribonucleotide-(2,3-dehydro-2,3-deoxyribose 5'-phosphate)-DNA + a 5'-end 5'-phospho-2'-deoxyribonucleoside-DNA + H(+). In terms of biological role, involved in base excision repair of DNA damaged by oxidation or by mutagenic agents. Acts as a DNA glycosylase that recognizes and removes damaged bases. Has a preference for oxidized purines, such as 7,8-dihydro-8-oxoguanine (8-oxoG). Has AP (apurinic/apyrimidinic) lyase activity and introduces nicks in the DNA strand. Cleaves the DNA backbone by beta-delta elimination to generate a single-strand break at the site of the removed base with both 3'- and 5'-phosphates. The polypeptide is Formamidopyrimidine-DNA glycosylase (Bartonella quintana (strain Toulouse) (Rochalimaea quintana)).